The sequence spans 299 residues: Pseudouridine-5'-phosphate glycosidase (299 aa).

Glu-23 serves as the catalytic Proton donor. Substrate-binding residues include Lys-84 and Val-104. Asp-136 contacts Mn(2+). Substrate is bound at residue Ser-138–Asp-140. The active-site Nucleophile is Lys-157.

It belongs to the pseudouridine-5'-phosphate glycosidase family. In terms of assembly, homotrimer. It depends on Mn(2+) as a cofactor.

The catalysed reaction is D-ribose 5-phosphate + uracil = psi-UMP + H2O. Catalyzes the reversible cleavage of pseudouridine 5'-phosphate (PsiMP) to ribose 5-phosphate and uracil. Functions biologically in the cleavage direction, as part of a pseudouridine degradation pathway. In Solibacter usitatus (strain Ellin6076), this protein is Pseudouridine-5'-phosphate glycosidase.